Consider the following 591-residue polypeptide: Cytidine monophosphate-N-acetylneuraminic acid hydroxylase (591 aa).

The 99-residue stretch at Leu-12–Leu-110 folds into the Rieske domain. [2Fe-2S] cluster is bound by residues Cys-52, His-54, Cys-73, and His-76.

The protein belongs to the CMP-Neu5Ac hydroxylase family. [2Fe-2S] cluster is required as a cofactor.

It localises to the cytoplasm. It carries out the reaction CMP-N-acetyl-beta-neuraminate + 2 Fe(II)-[cytochrome b5] + O2 + 2 H(+) = CMP-N-glycoloyl-beta-neuraminate + 2 Fe(III)-[cytochrome b5] + H2O. It participates in amino-sugar metabolism; N-acetylneuraminate metabolism. In terms of biological role, sialic acids are components of carbohydrate chains of glycoconjugates and are involved in cell-cell recognition and cell-pathogen interactions. Catalyzes the conversion of CMP-N-acetylneuraminic acid (CMP-Neu5Ac) into its hydroxylated derivative CMP-N-glycolylneuraminic acid (CMP-Neu5Gc), a sialic acid abundantly expressed at the surface of many cells. The sequence is that of Cytidine monophosphate-N-acetylneuraminic acid hydroxylase (cmah) from Danio rerio (Zebrafish).